The sequence spans 239 residues: NAD-dependent protein deacylase (239 aa).

The 234-residue stretch at 1 to 234 folds into the Deacetylase sirtuin-type domain; that stretch reads MENLNIVTLT…KKVYDYLREK (234 aa). NAD(+)-binding positions include 11–30 and 89–92; these read GAGISAESGIPTFRGKDGLW and QNVD. Catalysis depends on histidine 107, which acts as the Proton acceptor. Residues cysteine 115, cysteine 118, cysteine 136, and cysteine 139 each contribute to the Zn(2+) site. Residues 176 to 178, 202 to 204, and alanine 220 contribute to the NAD(+) site; these read GTS and NPE.

The protein belongs to the sirtuin family. Class III subfamily. Zn(2+) is required as a cofactor.

The protein resides in the cytoplasm. It catalyses the reaction N(6)-acetyl-L-lysyl-[protein] + NAD(+) + H2O = 2''-O-acetyl-ADP-D-ribose + nicotinamide + L-lysyl-[protein]. NAD-dependent protein deacetylase which modulates the activities of several proteins which are inactive in their acetylated form. This Aquifex aeolicus (strain VF5) protein is NAD-dependent protein deacylase.